Consider the following 162-residue polypeptide: Globin CTT-VIIB-7 (162 aa).

Residues 1-16 (MKFFAVLALCVVGAIA) form the signal peptide. In terms of domain architecture, Globin spans 18–162 (PLSADEANLV…TYAVALKSLE (145 aa)). H76 and H111 together coordinate heme b.

This sequence belongs to the globin family. Homodimer.

The protein is Globin CTT-VIIB-7 (CTT-7B7) of Chironomus thummi piger (Midge).